The following is a 964-amino-acid chain: Glycine dehydrogenase (decarboxylating) (964 aa).

At Lys-711 the chain carries N6-(pyridoxal phosphate)lysine.

This sequence belongs to the GcvP family. As to quaternary structure, the glycine cleavage system is composed of four proteins: P, T, L and H. The cofactor is pyridoxal 5'-phosphate.

It carries out the reaction N(6)-[(R)-lipoyl]-L-lysyl-[glycine-cleavage complex H protein] + glycine + H(+) = N(6)-[(R)-S(8)-aminomethyldihydrolipoyl]-L-lysyl-[glycine-cleavage complex H protein] + CO2. Its function is as follows. The glycine cleavage system catalyzes the degradation of glycine. The P protein binds the alpha-amino group of glycine through its pyridoxal phosphate cofactor; CO(2) is released and the remaining methylamine moiety is then transferred to the lipoamide cofactor of the H protein. In Prochlorococcus marinus (strain SARG / CCMP1375 / SS120), this protein is Glycine dehydrogenase (decarboxylating).